The chain runs to 193 residues: Probable GTP-binding protein EngB (193 aa).

Residues 22-193 (SFPEIVFAGR…LAHFDQYICQ (172 aa)) form the EngB-type G domain. GTP contacts are provided by residues 30-37 (GRSNVGKS), 57-61 (GKTRL), 75-78 (DLPG), 142-145 (TKYD), and 172-174 (YSS). Mg(2+) is bound by residues S37 and T59.

The protein belongs to the TRAFAC class TrmE-Era-EngA-EngB-Septin-like GTPase superfamily. EngB GTPase family. The cofactor is Mg(2+).

Functionally, necessary for normal cell division and for the maintenance of normal septation. This is Probable GTP-binding protein EngB from Pelodictyon phaeoclathratiforme (strain DSM 5477 / BU-1).